A 220-amino-acid chain; its full sequence is Adenylate kinase (220 aa).

13-18 (GAGKGT) is a binding site for ATP. Residues 33-62 (ATGDMLRSQVARQTELGKEAKKIMDQGGLV) form an NMP region. AMP contacts are provided by residues Thr-34, Arg-39, 60 to 62 (GLV), 89 to 92 (GFPR), and Gln-96. The LID stretch occupies residues 130–167 (GRLVHPGSGRSYHLEFNPPKVPMKDDVTGEPLIQRSDD). ATP is bound by residues Arg-131 and 140–141 (SY). Arg-164 and Arg-175 together coordinate AMP. Gln-203 serves as a coordination point for ATP.

Belongs to the adenylate kinase family. AK2 subfamily. In terms of assembly, monomer.

It localises to the cytoplasm. It is found in the cytosol. Its subcellular location is the mitochondrion intermembrane space. The protein resides in the nucleus. The enzyme catalyses AMP + ATP = 2 ADP. Functionally, catalyzes the reversible transfer of the terminal phosphate group between ATP and AMP. Plays an important role in cellular energy homeostasis and in adenine nucleotide metabolism. Adenylate kinase activity is critical for regulation of the phosphate utilization and the AMP de novo biosynthesis pathways. This Schizosaccharomyces pombe (strain 972 / ATCC 24843) (Fission yeast) protein is Adenylate kinase (adk1).